The following is a 290-amino-acid chain: Festuclavine dehydrogenase easG (290 aa).

This sequence belongs to the fgaFS/easG family.

The catalysed reaction is festuclavine + NAD(+) = 6,8-dimethyl-6,7-didehydroergoline + NADH + H(+). It participates in alkaloid biosynthesis; ergot alkaloid biosynthesis. Functionally, festuclavine dehydrogenase; part of the gene cluster that mediates the biosynthesis of fumiclavanine C, a fungal ergot alkaloid. DmaW catalyzes the first step of ergot alkaloid biosynthesis by condensing dimethylallyl diphosphate (DMAP) and tryptophan to form 4-dimethylallyl-L-tryptophan. The second step is catalyzed by the methyltransferase easF that methylates 4-dimethylallyl-L-tryptophan in the presence of S-adenosyl-L-methionine, resulting in the formation of 4-dimethylallyl-L-abrine. The catalase easC and the FAD-dependent oxidoreductase easE then transform 4-dimethylallyl-L-abrine to chanoclavine-I which is further oxidized by EasD in the presence of NAD(+), resulting in the formation of chanoclavine-I aldehyde. EasA reduces chanoclavine-I aldehyde to dihydrochanoclavine-I aldehyde that spontaneously dehydrates to form 6,8-dimethyl-6,7-didehydroergoline. EasG then catalyzes the reduction of 6,8-dimethyl-6,7-didehydroergoline to form festuclavine. Hydrolysis of festuclavine by easM then leads to the formation of fumigaclavine B which is in turn acetylated by easN to fumigaclavine A. Finally, easL catalyzes the conversion of fumigaclavine A into fumigaclavine C by attaching a dimethylallyl moiety to C-2 of the indole nucleus. The polypeptide is Festuclavine dehydrogenase easG (Aspergillus fumigatus (strain ATCC MYA-4609 / CBS 101355 / FGSC A1100 / Af293) (Neosartorya fumigata)).